Consider the following 302-residue polypeptide: Geranylgeranyl diphosphate synthase (302 aa).

Isopentenyl diphosphate is bound by residues Lys-53, Arg-56, and His-87. Residues Asp-94 and Asp-100 each contribute to the Mg(2+) site. Arg-105 contributes to the (2E,6E)-farnesyl diphosphate binding site. Arg-106 provides a ligand contact to isopentenyl diphosphate. (2E,6E)-farnesyl diphosphate-binding residues include Lys-189, Thr-190, and Gln-227.

This sequence belongs to the FPP/GGPP synthase family. Requires Mg(2+) as cofactor.

It carries out the reaction isopentenyl diphosphate + (2E,6E)-farnesyl diphosphate = (2E,6E,10E)-geranylgeranyl diphosphate + diphosphate. The protein operates within isoprenoid biosynthesis; geranylgeranyl diphosphate biosynthesis; geranylgeranyl diphosphate from farnesyl diphosphate and isopentenyl diphosphate: step 1/1. Its function is as follows. Catalyzes the condensation of farnesyl diphosphate (FPP) and isopentenyl diphosphate (IPP) to yield geranylgeranyl diphosphate (GGPP) needed for biosynthesis of carotenoids and diterpenes. This Pantoea ananas (Erwinia uredovora) protein is Geranylgeranyl diphosphate synthase (crtE).